The sequence spans 313 residues: Ethylene-responsive transcription factor ERN2 (313 aa).

Positions 1–10 (MEIQFDEPKK) are enriched in basic and acidic residues. The tract at residues 1–29 (MEIQFDEPKKSLRPKKVNKFKGRNKKSET) is disordered. A compositionally biased stretch (basic residues) spans 11 to 24 (SLRPKKVNKFKGRN). The segment at residues 32-89 (KFVGVRQRPSGRYVAEIKDTTQNIRMWLGTFETAEEAARAYDEAATLLRGSKTRTNFV) is a DNA-binding region (AP2/ERF). 2 disordered regions span residues 108 to 143 (NRKKGTKQQDMNGISSTTSHADTTNDTTSDGSTSST) and 157 to 204 (TSAS…SSST). Composition is skewed to low complexity over residues 122–143 (SSTTSHADTTNDTTSDGSTSST) and 157–193 (TSASGVTSTSTNISTSASGVASTSTDISTNSSNTNVN).

Belongs to the AP2/ERF transcription factor family. ERF subfamily. In terms of tissue distribution, expressed in roots, root hairs and leaves. Expressed in root epidermis and root hairs.

Its subcellular location is the nucleus. Its function is as follows. Transcription factor involved in symbiotic nodule signaling in response to rhizobial Nod factors (NFs). Binds to the GCC box (NF-responsive box) of ENOD11 promoter. Acts as a transcriptional activator of NF-responsive box-containing target gene promoters in root hairs. Involved in early stages of root nodule development. Functions redundantly with ERN1. Is essential with ERN1 for the initiation of root hair infection, and nodule organogenesis and development. Required for accurate expression of the NF signaling genes ENOD11 and ENOD12. In Medicago truncatula (Barrel medic), this protein is Ethylene-responsive transcription factor ERN2.